The following is a 222-amino-acid chain: Sigma non-opioid intracellular receptor 1 (222 aa).

The Lumenal portion of the chain corresponds to 1-6 (MSLIRT). A helical membrane pass occupies residues 7 to 29 (ILKLVVVVGFLSLTVQFIRHWMA). The Cytoplasmic portion of the chain corresponds to 30–222 (NKQYVFTKEE…STFLTESGVL (193 aa)). Positions 97–104 (SLTEYVLL) are important for ligand-binding. Residues 175–222 (FIPSTLGFALADTMFSTQDFLTLFYTARVYVKGMILEASTFLTESGVL) form a C-terminal hydrophobic region region.

Belongs to the ERG2 family. Homotrimer.

Its subcellular location is the nucleus inner membrane. The protein localises to the nucleus outer membrane. It localises to the nucleus envelope. It is found in the cytoplasmic vesicle. The protein resides in the endoplasmic reticulum membrane. Its subcellular location is the membrane. Its function is as follows. May function in lipid transport from the endoplasmic reticulum and be involved in a wide array of cellular functions probably through regulation of the biogenesis of lipid microdomains at the plasma membrane. May regulate calcium efflux at the endoplasmic reticulum. In Danio rerio (Zebrafish), this protein is Sigma non-opioid intracellular receptor 1 (sigmar1).